The primary structure comprises 201 residues: Small ribosomal subunit protein uS4c (201 aa).

A disordered region spans residues 20–43 (GLTSKRPRAGSDLRNQSRSGKRSQ). Residues 89 to 149 (MRLDNILFRL…DEQKSRALIQ (61 aa)) form the S4 RNA-binding domain.

It belongs to the universal ribosomal protein uS4 family. As to quaternary structure, part of the 30S ribosomal subunit. Contacts protein S5. The interaction surface between S4 and S5 is involved in control of translational fidelity.

The protein localises to the plastid. It is found in the chloroplast. Functionally, one of the primary rRNA binding proteins, it binds directly to 16S rRNA where it nucleates assembly of the body of the 30S subunit. In terms of biological role, with S5 and S12 plays an important role in translational accuracy. This chain is Small ribosomal subunit protein uS4c (rps4), found in Buxus microphylla (Littleleaf boxwood).